The following is a 325-amino-acid chain: Sel1-repeat-containing protein YbeQ (325 aa).

Sel1-like repeat units lie at residues 26–61, 63–97, 103–130, 132–167, 168–203, 205–239, 242–275, and 280–305; these read EAQYIVGFYYNRDSAIDSPDDEKAFYWLKLAAEQGH, EAQYSLGQKYTEDKSRHKDNEQAIFWLKKAALQGH, ALGWTLDRGEAPNYKEAVVWYQIAAESG, SYAQNNLGWMYRNGNGVAKDYALAFFWYKQAALQGH, SDAQNNLADLYEDGKGVAQNKTLAAFWYLKSAQQGN, HAQFQIAWDYNAGEGVDQDYKQAMYWYLKAAAQGS, AYVNIGYMYKHGQGVEKDYQAAFEWFTKAAECND, and YNLAIMYHYGEGRPVDLRQALDLYRK.

This sequence to E.coli YbeT.

This Escherichia coli (strain K12) protein is Sel1-repeat-containing protein YbeQ (ybeQ).